Consider the following 426-residue polypeptide: Protein FAM181B (426 aa).

Disordered regions lie at residues 106-157 (GLMG…AAAA) and 226-246 (NLPPSFFTEPSRAGGGGCGPS). Residues 128–141 (PLAAPSAPTVAAPA) are compositionally biased toward low complexity.

Belongs to the FAM181 family.

The sequence is that of Protein FAM181B (FAM181B) from Homo sapiens (Human).